The sequence spans 175 residues: Calcineurin subunit B (175 aa).

EF-hand domains lie at 21 to 56 (DEIE…SANP), 60 to 88 (RIME…FSGR), 90 to 125 (SKDE…MVGS), and 131 to 166 (QLQQ…TEVA). 19 residues coordinate Ca(2+): Asp-34, Asp-36, Ser-38, Ser-40, Glu-45, Asp-66, Asp-68, Ser-70, Asp-72, Glu-77, Asp-103, Asp-105, Asp-107, Glu-114, Asp-144, Asp-146, Asp-148, Gln-150, and Glu-155.

The protein belongs to the calcineurin regulatory subunit family. Composed of a catalytic subunit (A) and a regulatory subunit (B).

Regulatory subunit of calcineurin, a calcium-dependent, calmodulin stimulated protein phosphatase. Confers calcium sensitivity. This is Calcineurin subunit B (CNB1) from Candida glabrata (strain ATCC 2001 / BCRC 20586 / JCM 3761 / NBRC 0622 / NRRL Y-65 / CBS 138) (Yeast).